The primary structure comprises 97 residues: Mapk-regulated corepressor-interacting protein 1 (97 aa).

The segment at 1–29 (MTSSPVSRVVYNGKRNSSPRSPTNSSEIF) is disordered. Residues 15-26 (RNSSPRSPTNSS) are compositionally biased toward low complexity. Serine 21 is subject to Phosphoserine. A Phosphothreonine modification is found at threonine 30. Tyrosine 41 is modified (phosphotyrosine). N6-acetyllysine is present on lysine 79. The PXDLS motif signature appears at 80–84 (PIDLS).

The protein belongs to the MCRIP family. Interacts (unphosphorylated form, via the PXDLS motif) with CTBP1, competitively inhibiting CTBP-ZEB1 interaction. Interacts with CTBP2. Interacts with MCRIP2. Interacts with DDX6. In terms of processing, phosphorylation by MAPK3/1 (ERK1/2) regulates MCRIP1 binding to CTBP(s). Widely expressed (at protein level).

Its subcellular location is the nucleus. It is found in the cytoplasm. It localises to the stress granule. Functionally, the phosphorylation status of MCRIP1 functions as a molecular switch to regulate epithelial-mesenchymal transition. Unphosphorylated MCRIP1 binds to and inhibits the transcriptional corepressor CTBP(s). When phosphorylated by MAPK/ERK, MCRIP1 releases CTBP(s) resulting in transcriptional silencing of the E-cadherin gene and induction of epithelial-mesenchymal transition. The chain is Mapk-regulated corepressor-interacting protein 1 (Mcrip1) from Mus musculus (Mouse).